A 248-amino-acid chain; its full sequence is UPF0246 protein lp_0089 (248 aa).

This sequence belongs to the UPF0246 family.

This Lactiplantibacillus plantarum (strain ATCC BAA-793 / NCIMB 8826 / WCFS1) (Lactobacillus plantarum) protein is UPF0246 protein lp_0089.